We begin with the raw amino-acid sequence, 1364 residues long: RecQ-like DNA helicase BLM (1364 aa).

Disordered stretches follow at residues 108–131 and 147–174; these read VHGN…TGIN and DDFD…KNTS. The interval 328-377 is necessary for dimerization and homooligomerization; it reads DSKVPSQLLTLMLEICDLVDKIPISELHVLSCGLDLKKKRDMRKRLLSND. 3 disordered regions span residues 380–416, 484–515, and 535–580; these read FRSS…ESLS, RFNT…NPDL, and SPAA…SLLS. The span at 387–399 shows a compositional bias: low complexity; that stretch reads SSTVSLTSCTSST. Residues 484-503 are compositionally biased toward polar residues; it reads RFNTPQNEKPISSSTCTRPY. Residues 555 to 566 are compositionally biased toward basic and acidic residues; that stretch reads AQLDSRNKEKNT. A compositionally biased stretch (polar residues) spans 567-580; it reads RNNTGDTTNPSLLS. ATP is bound by residues 620–624 and 644–648; these read FRTNQ and GGGKS. Residues 628-803 form the Helicase ATP-binding domain; it reads INACLCGEDC…LNQLKMTKPQ (176 aa). Residues 747–750 carry the DEAH box motif; sequence DEAH. 2 3' overhang DNA-binding regions span residues 822 to 825 and 849 to 851; these read KPKR and SRH. In terms of domain architecture, Helicase C-terminal spans 829–976; sequence DCVEWIKKHH…TKQTHFNNLY (148 aa). Position 934 (Arg934) interacts with ATP. Residues 952 to 955 form a 3' overhang DNA-binding region; that stretch reads RIRR. Cys988, Cys1007, Cys1015, and Cys1018 together coordinate Zn(2+). Residues 1046 to 1090 are DNA Holliday junction binding; the sequence is LVQGRGKGRSNNTRLTLNMMVDIFLGSKSAKIQTGLFGKGAAYSR. 3' overhang DNA-binding regions lie at residues 1061–1063, 1072–1076, and 1111–1117; these read TLN, SKSAK, and YITFNDQ. Residues 1164 to 1244 enclose the HRDC domain; that stretch reads EEMVKKCQAE…QKYSEWTLPV (81 aa). The interval 1179-1196 is necessary for ssDNA and DNA Holliday junction binding; sequence KRLGKIFGVHYFNIFNTA. Asn1194 is an ATP binding site. The segment at 1251–1364 is disordered; the sequence is SGGPANVSAR…RFLKPSYSMF (114 aa). Residues 1273–1282 are compositionally biased toward polar residues; the sequence is KSSYFSSNNK. Residues 1283–1300 are compositionally biased toward basic residues; it reads KGPKRKNSSYFGKSKKRK. Residues 1285-1301 carry the Nuclear localization signal motif; that stretch reads PKRKNSSYFGKSKKRKT. Residues 1306–1335 are compositionally biased toward polar residues; the sequence is QQSRSKNGNSSYARKNSTAKTSSSYISGSK.

It belongs to the helicase family. RecQ subfamily. Monomer. Homodimer (via N-terminus). Homotetramer (via N-terminus); dimer of dimers. Homohexamer (via N-terminus). Self-association negatively regulates DNA unwinding amplitude and rate. Oligomer complexes dissociate into monomer in presence of ATP. Requires Zn(2+) as cofactor.

It is found in the nucleus. The catalysed reaction is Couples ATP hydrolysis with the unwinding of duplex DNA by translocating in the 3'-5' direction.. The enzyme catalyses ATP + H2O = ADP + phosphate + H(+). ATP-dependent DNA helicase that unwinds single- and double-stranded DNA in a 3'-5' direction. Participates in DNA replication and repair. Involved in 5'-end resection of DNA during double-strand break (DSB) repair. Negatively regulates sister chromatid exchange (SCE). Stimulates DNA 4-way junction branch migration and DNA Holliday junction dissolution. Binds single-stranded DNA (ssDNA), forked duplex DNA and DNA Holliday junction. The chain is RecQ-like DNA helicase BLM (blm) from Xenopus laevis (African clawed frog).